Consider the following 209-residue polypeptide: Bcl-2 homologous antagonist/killer (209 aa).

The interval 1–28 (MASGQGPGPPKVGCDESPSPSEQQVAQD) is disordered. Ala2 carries the post-translational modification N-acetylalanine. Over residues 18–27 (PSPSEQQVAQ) the composition is skewed to polar residues. Positions 72-86 (VGRQLALIGDDINRR) match the BH3 motif. A BH1 motif is present at residues 115-134 (SLFKSGISWGRVVALLGFGY). Asp158 and His162 together coordinate Zn(2+). Residues 167-182 (RWIAQRGGWVAALNFR) carry the BH2 motif. A helical transmembrane segment spans residues 186–203 (ILTVMVIFGVVLLGQFVV).

This sequence belongs to the Bcl-2 family. In terms of assembly, homodimer. Formation of the homodimer is zinc-dependent. Forms heterodimers with BCL2 and BCL2L1 isoform Bcl-X(L). Forms heterooligomers with BAX. Interacts with BCL2A1. Interacts withRTL10/BOP. Interacts with VDAC1. Interacts with GIMAP3/IAN4 and GIMAP5/IAN5. As to quaternary structure, (Microbial infection) Interacts with gamma-herpesvirus 68 protein vBCL2. Widely expressed.

The protein resides in the mitochondrion outer membrane. Functionally, in the presence of an appropriate stimulus, accelerates programmed cell death by binding to, and antagonizing the anti-apoptotic action of BCL2. This is Bcl-2 homologous antagonist/killer (Bak1) from Mus musculus (Mouse).